A 473-amino-acid polypeptide reads, in one-letter code: Keratin, type I cytoskeletal 16 (473 aa).

The tract at residues 1–116 is head; it reads MTTCSRQFTS…AGGDGLLVGS (116 aa). Positions 117-152 are coil 1A; that stretch reads EKVTMQNLNDRLASYLDKVRALEEANADLEVKIRDW. The IF rod domain occupies 117 to 428; that stretch reads EKVTMQNLND…RLLEGEDAHL (312 aa). A linker 1 region spans residues 153 to 170; that stretch reads YQRQRPSEIKDYSPYFKT. Residues 171 to 262 are coil 1B; that stretch reads IEDLRNKIIA…KNHEEEMLAL (92 aa). The tract at residues 263 to 285 is linker 12; sequence RGQTGGDVNVEMDAAPGVDLSRI. Residues 286–424 form a coil 2 region; it reads LNEMRDQYEQ…ATYRRLLEGE (139 aa). The segment at 425-473 is tail; the sequence is DAHLSSQQASGQSYSSREVFTSSSSSSSRQTRPILKEQSSSSFSQGQSS. The segment at 428–473 is disordered; that stretch reads LSSQQASGQSYSSREVFTSSSSSSSRQTRPILKEQSSSSFSQGQSS. Composition is skewed to low complexity over residues 429–452 and 462–473; these read SSQQ…SSSS and QSSSSFSQGQSS.

It belongs to the intermediate filament family. Heterodimer of a type I and a type II keratin. KRT16 associates with KRT6 isomers (KRT6A or KRT6B). Interacts with TCHP. Interacts with TRADD. Expressed in the corneal epithelium (at protein level).

Its function is as follows. Epidermis-specific type I keratin that plays a key role in skin. Acts as a regulator of innate immunity in response to skin barrier breach: required for some inflammatory checkpoint for the skin barrier maintenance. This Homo sapiens (Human) protein is Keratin, type I cytoskeletal 16 (KRT16).